The sequence spans 1978 residues: Centrosomal protein Cep290 (1978 aa).

The necessary and sufficient for function in ciliogenesis, transition zone (TZ) assembly, and recruitment of DZP1 and Mks1 to the TZ. Also required for subcellular localization to the cilium basal body stretch occupies residues 1 to 650 (MSMDIPETVS…SLCEVPEIAE (650 aa)). Coiled-coil stretches lie at residues 76–384 (DRRL…KSQQ) and 471–505 (IERL…LQQD). Positions 271 to 296 (QLEGKSISSGQTNSSNSQSQQEEEHA) are disordered. Over residues 276–290 (SISSGQTNSSNSQSQ) the composition is skewed to low complexity. The interval 663–688 (ATRPSSPTEATMGLRRPTVPDPEEKP) is disordered. Coiled-coil stretches lie at residues 853-887 (FEEQ…ANEQ), 922-970 (LAKV…TQQD), and 1192-1233 (ADAV…SRSE). The span at 1313 to 1324 (KEKLRQKPEVPV) shows a compositional bias: basic and acidic residues. The interval 1313–1397 (KEKLRQKPEV…EKQDTEELKE (85 aa)) is disordered. Over residues 1329–1341 (STDSRSSSSSDSS) the composition is skewed to low complexity. Acidic residues predominate over residues 1379 to 1391 (VTEEPEGEEEKQD). 2 coiled-coil regions span residues 1405–1439 (IKDL…CQER) and 1501–1654 (LNRT…LESK). 2 disordered regions span residues 1684 to 1714 (VGVS…AHHH) and 1859 to 1884 (LKDG…RLQQ). The span at 1693–1708 (PSESPETYTGPSSECS) shows a compositional bias: polar residues. Residues 1726 to 1935 (IEALKSRIEL…KEQLVKKTQL (210 aa)) are a coiled coil.

Interacts (via N-terminus) with DZIP1. Expressed in sensory neurons type I and in germ cells (at protein level).

It is found in the cytoplasm. It localises to the cytoskeleton. The protein resides in the cilium basal body. The protein localises to the microtubule organizing center. Its subcellular location is the centrosome. It is found in the centriole. In terms of biological role, essential for ciliogenesis in sensory neurons and spermatocytes. During neuron and spermatocyte ciliogenesis, essential for initiating transition zone (TZ) assembly and is required for the formation of diverse connections between microtubules and between microtubules and the membrane. Regulates TZ assembly by recruiting DZIP1 to the plasma membrane where it promotes early ciliary membrane formation resulting in the initiation of TZ assembly. This chain is Centrosomal protein Cep290, found in Drosophila melanogaster (Fruit fly).